The chain runs to 257 residues: 1-acyl-sn-glycerol-3-phosphate acyltransferase (257 aa).

Residues 10–30 (VLFYLLLSASAFVWGTLSFFI) traverse the membrane as a helical segment. The HXXXXD motif signature appears at 82 to 87 (HQSTWE). Residues 105-125 (ELLYVPFFGWALALLKPIAID) form a helical membrane-spanning segment.

The protein belongs to the 1-acyl-sn-glycerol-3-phosphate acyltransferase family.

It is found in the cell inner membrane. The catalysed reaction is a 1-acyl-sn-glycero-3-phosphate + an acyl-CoA = a 1,2-diacyl-sn-glycero-3-phosphate + CoA. The protein operates within phospholipid metabolism; CDP-diacylglycerol biosynthesis; CDP-diacylglycerol from sn-glycerol 3-phosphate: step 2/3. Functionally, converts lysophosphatidic acid (LPA) into phosphatidic acid by incorporating acyl moiety at the 2 position. This is 1-acyl-sn-glycerol-3-phosphate acyltransferase from Pseudomonas aeruginosa (strain ATCC 15692 / DSM 22644 / CIP 104116 / JCM 14847 / LMG 12228 / 1C / PRS 101 / PAO1).